Reading from the N-terminus, the 1450-residue chain is Inactive serine/threonine-protein kinase TEX14 (1450 aa).

ANK repeat units lie at residues 27-54 (LHEY…AVNT), 55-84 (QGQS…DPNH), and 88-117 (DGST…DLRL). Ser-175 and Ser-186 each carry phosphoserine. Positions 199-512 (IISAQNIYSF…ILKNDLKEFI (314 aa)) constitute a Protein kinase domain. Residues 205–213 (IYSFGFGKF) and Lys-267 each bind ATP. Ser-431 is subject to Phosphoserine; by PLK1. Ser-561 and Ser-662 each carry phosphoserine. The tract at residues 700 to 720 (SDSLGSLNLPEPTREAKGKTS) is disordered. The GPPX3Y signature appears at 791–797 (GPPSLAY). Disordered regions lie at residues 852-906 (VSEE…MASV), 947-977 (PPWN…RGPE), 992-1012 (DEPK…DKNK), and 1035-1062 (QPEQ…SSPI). 2 stretches are compositionally biased toward polar residues: residues 875 to 886 (KQSTGEQLPSTQ) and 894 to 906 (KNTN…MASV). The short motif at 889 to 897 (RESLEKNTN) is the D-box element. Residues 992-1011 (DEPKGNTKFGKMDNSDCDKN) show a composition bias toward basic and acidic residues. Positions 1038–1061 (QNEASQASCDTSVGTEKFYSTSSP) are enriched in polar residues. A phosphoserine mark is found at Ser-1060 and Ser-1221. Disordered stretches follow at residues 1261-1282 (THAT…QQHL) and 1300-1418 (KQQQ…SLGT). 2 stretches are compositionally biased toward polar residues: residues 1300–1311 (KQQQVSSLASHE) and 1332–1344 (TNSS…LSSR). Ser-1357 and Ser-1358 each carry phosphoserine. Composition is skewed to basic and acidic residues over residues 1383-1397 (STRE…VVEQ) and 1404-1413 (SIKPERRESD). 2 positions are modified to phosphoserine: Ser-1412 and Ser-1449.

It belongs to the protein kinase superfamily. As to quaternary structure, interacts with KIF23 and RBM44. Interacts with CEP55; inhibiting interaction between CEP55 and PDCD6IP/ALIX and TSG101. In terms of processing, phosphorylated on Thr residues by CDK1 during early phases of mitosis, promoting the interaction with PLK1 and recruitment to kinetochores. Phosphorylated on Ser-431 by PLK1 during late prometaphase promotes the rapid depletion from kinetochores and its subsequent degradation by the APC/C complex. As to expression, detected in testis and spermatogonia. Not detectable in the other tissues tested.

It is found in the cytoplasm. The protein resides in the midbody. It localises to the chromosome. The protein localises to the centromere. Its subcellular location is the kinetochore. In terms of biological role, required both for the formation of intercellular bridges during meiosis and for kinetochore-microtubule attachment during mitosis. Intercellular bridges are evolutionarily conserved structures that connect differentiating germ cells and are required for spermatogenesis and male fertility. Acts by promoting the conversion of midbodies into intercellular bridges via its interaction with CEP55: interaction with CEP55 inhibits the interaction between CEP55 and PDCD6IP/ALIX and TSG101, blocking cell abscission and leading to transform midbodies into intercellular bridges. Also plays a role during mitosis: recruited to kinetochores by PLK1 during early mitosis and regulates the maturation of the outer kinetochores and microtubule attachment. Has no protein kinase activity in vitro. This Mus musculus (Mouse) protein is Inactive serine/threonine-protein kinase TEX14 (Tex14).